A 339-amino-acid chain; its full sequence is Dihydroorotate dehydrogenase (quinone) (339 aa).

Residues 62 to 66 and T86 contribute to the FMN site; that span reads AGMDK. K66 lines the substrate pocket. 111 to 115 serves as a coordination point for substrate; it reads NRMGF. FMN-binding residues include N139 and N172. N172 is a binding site for substrate. S175 serves as the catalytic Nucleophile. Position 177 (N177) interacts with substrate. K217 and T245 together coordinate FMN. 246–247 serves as a coordination point for substrate; it reads NT. FMN contacts are provided by residues G268, G297, and 318–319; that span reads YS.

Belongs to the dihydroorotate dehydrogenase family. Type 2 subfamily. Monomer. The cofactor is FMN.

The protein localises to the cell membrane. It carries out the reaction (S)-dihydroorotate + a quinone = orotate + a quinol. It participates in pyrimidine metabolism; UMP biosynthesis via de novo pathway; orotate from (S)-dihydroorotate (quinone route): step 1/1. Its function is as follows. Catalyzes the conversion of dihydroorotate to orotate with quinone as electron acceptor. This chain is Dihydroorotate dehydrogenase (quinone), found in Shewanella baltica (strain OS185).